We begin with the raw amino-acid sequence, 117 residues long: UPF0342 protein BcerKBAB4_0767 (117 aa).

It belongs to the UPF0342 family.

This chain is UPF0342 protein BcerKBAB4_0767, found in Bacillus mycoides (strain KBAB4) (Bacillus weihenstephanensis).